The chain runs to 442 residues: O-acetyl-L-homoserine sulfhydrylase (442 aa).

The tract at residues 1 to 32 (MVGPSGESMPRNFKPETIALHGGQEPDPTTTS) is disordered. Lys216 carries the N6-(pyridoxal phosphate)lysine modification.

It belongs to the trans-sulfuration enzymes family. Pyridoxal 5'-phosphate is required as a cofactor.

It catalyses the reaction O-acetyl-L-homoserine + hydrogen sulfide = L-homocysteine + acetate. Its pathway is amino-acid biosynthesis; L-methionine biosynthesis via de novo pathway; L-homocysteine from O-acetyl-L-homoserine: step 1/1. With respect to regulation, feedback inhibited at very high concentrations of methionine or S-adenosylmethionine. Functionally, catalyzes the conversion of O-acetyl-L-homoserine (OAH) into homocysteine in the methionine biosynthesis pathway. Can also use O-succinyl-homoserine (OSH), although at low efficiency. The polypeptide is O-acetyl-L-homoserine sulfhydrylase (Leptospira meyeri).